The sequence spans 621 residues: Type 2 DNA topoisomerase 6 subunit B (621 aa).

Residues Asn48, Asp80, 101–102 (SR), 111–118 (GQQGIGIS), and Lys435 contribute to the ATP site.

Belongs to the TOP6B family. In terms of assembly, homodimer. Heterotetramer of two Top6A and two Top6B chains.

It catalyses the reaction ATP-dependent breakage, passage and rejoining of double-stranded DNA.. In terms of biological role, relaxes both positive and negative superturns and exhibits a strong decatenase activity. The polypeptide is Type 2 DNA topoisomerase 6 subunit B (Methanosarcina mazei (strain ATCC BAA-159 / DSM 3647 / Goe1 / Go1 / JCM 11833 / OCM 88) (Methanosarcina frisia)).